A 117-amino-acid polypeptide reads, in one-letter code: Probable prefoldin subunit 1 (117 aa).

This sequence belongs to the prefoldin subunit beta family. Heterohexamer of two PFD-alpha type and four PFD-beta type subunits.

The protein resides in the cytoplasm. Binds specifically to cytosolic chaperonin (c-CPN) and transfers target proteins to it. Binds to nascent polypeptide chain and promotes folding in an environment in which there are many competing pathways for nonnative proteins. Has a role in gonadogenesis. This chain is Probable prefoldin subunit 1 (pfd-1), found in Caenorhabditis briggsae.